Reading from the N-terminus, the 541-residue chain is MAKDIKFSADARESMVRGVDILADTVKVTLGPKGRNVVLEKAFGSPLITNDGVTIAKEIELEDHFENMGAKLVSEVASKTNDIAGDGTTTATVLTQAIVREGLKNVTAGANPIGIRRGIEAATTTAVEALKAVAQPVSGKEAIAQVAAVSSRSEKVGDYISEAMERVGNDGVITIEESRGMETELEVVEGMQFDRGYLSQYMVTDNEKMVADLENPFILITDKKISNIQDILPLLEEVLKTSRPLLIIADDVDGEALPTLVLNKIRGTFNVVAVKAPGFGDRRKAMLEDIAVLTGGTVITEDLGLELKDATMAALGQAAKVTVDKDNTVIVEGAGSSEAIANRVNLIKSQLETTTSEFDREKLQERLAKLAGGVAVIKVGAATETELKEMKLRIEDALNATRAAVEEGIVAGGGTALINVMDKVAALELDGDAATGRNIVLRALEEPVRQIAYNAGYEGSVIIDKLKNSAAGVGFNAATGEWVDMIATGIIDPVKVTRSALQNAASVAGLILTTEAVVATKPEPAAPAMPQGMDPGMMGGF.

ATP contacts are provided by residues 29–32 (TLGP), 86–90 (DGTTT), Gly413, 476–478 (NAA), and Asp492.

Belongs to the chaperonin (HSP60) family. In terms of assembly, forms a cylinder of 14 subunits composed of two heptameric rings stacked back-to-back. Interacts with the co-chaperonin GroES.

It localises to the cytoplasm. The catalysed reaction is ATP + H2O + a folded polypeptide = ADP + phosphate + an unfolded polypeptide.. In terms of biological role, together with its co-chaperonin GroES, plays an essential role in assisting protein folding. The GroEL-GroES system forms a nano-cage that allows encapsulation of the non-native substrate proteins and provides a physical environment optimized to promote and accelerate protein folding. The polypeptide is Chaperonin GroEL (Streptococcus equi subsp. zooepidemicus (strain H70)).